We begin with the raw amino-acid sequence, 1381 residues long: DNA-directed RNA polymerase subunit beta'' (1381 aa).

Residues C220, C293, C300, and C303 each contribute to the Zn(2+) site.

The protein belongs to the RNA polymerase beta' chain family. RpoC2 subfamily. In plastids the minimal PEP RNA polymerase catalytic core is composed of four subunits: alpha, beta, beta', and beta''. When a (nuclear-encoded) sigma factor is associated with the core the holoenzyme is formed, which can initiate transcription. Zn(2+) is required as a cofactor.

It localises to the plastid. It is found in the chloroplast. It catalyses the reaction RNA(n) + a ribonucleoside 5'-triphosphate = RNA(n+1) + diphosphate. Its function is as follows. DNA-dependent RNA polymerase catalyzes the transcription of DNA into RNA using the four ribonucleoside triphosphates as substrates. In Draba nemorosa (Woodland whitlowgrass), this protein is DNA-directed RNA polymerase subunit beta''.